We begin with the raw amino-acid sequence, 127 residues long: Phosphoribosyl-AMP cyclohydrolase (127 aa).

Asp-83 is a Mg(2+) binding site. Cys-84 serves as a coordination point for Zn(2+). Positions 85 and 87 each coordinate Mg(2+). Zn(2+) is bound by residues Cys-100 and Cys-107.

This sequence belongs to the PRA-CH family. As to quaternary structure, homodimer. It depends on Mg(2+) as a cofactor. Zn(2+) serves as cofactor.

The protein resides in the cytoplasm. It carries out the reaction 1-(5-phospho-beta-D-ribosyl)-5'-AMP + H2O = 1-(5-phospho-beta-D-ribosyl)-5-[(5-phospho-beta-D-ribosylamino)methylideneamino]imidazole-4-carboxamide. It participates in amino-acid biosynthesis; L-histidine biosynthesis; L-histidine from 5-phospho-alpha-D-ribose 1-diphosphate: step 3/9. Functionally, catalyzes the hydrolysis of the adenine ring of phosphoribosyl-AMP. This Methanocaldococcus jannaschii (strain ATCC 43067 / DSM 2661 / JAL-1 / JCM 10045 / NBRC 100440) (Methanococcus jannaschii) protein is Phosphoribosyl-AMP cyclohydrolase.